The primary structure comprises 442 residues: 3-phosphoshikimate 1-carboxyvinyltransferase (442 aa).

Lys-25, Ser-26, and Arg-30 together coordinate 3-phosphoshikimate. Lys-25 contacts phosphoenolpyruvate. Gly-96 and Arg-124 together coordinate phosphoenolpyruvate. 3-phosphoshikimate contacts are provided by Ser-171, Ser-172, Gln-173, Ser-203, Asp-325, and Lys-352. Residue Gln-173 coordinates phosphoenolpyruvate. The active-site Proton acceptor is the Asp-325. Phosphoenolpyruvate is bound by residues Arg-356, Arg-400, and Lys-425.

The protein belongs to the EPSP synthase family. Monomer.

It is found in the cytoplasm. The catalysed reaction is 3-phosphoshikimate + phosphoenolpyruvate = 5-O-(1-carboxyvinyl)-3-phosphoshikimate + phosphate. It functions in the pathway metabolic intermediate biosynthesis; chorismate biosynthesis; chorismate from D-erythrose 4-phosphate and phosphoenolpyruvate: step 6/7. Functionally, catalyzes the transfer of the enolpyruvyl moiety of phosphoenolpyruvate (PEP) to the 5-hydroxyl of shikimate-3-phosphate (S3P) to produce enolpyruvyl shikimate-3-phosphate and inorganic phosphate. The polypeptide is 3-phosphoshikimate 1-carboxyvinyltransferase (Bordetella parapertussis (strain 12822 / ATCC BAA-587 / NCTC 13253)).